The sequence spans 312 residues: DNA-directed RNA polymerase subunit alpha (312 aa).

The interval 1-226 (MIEFEKPIIT…EHLNLFTDLT (226 aa)) is alpha N-terminal domain (alpha-NTD). The tract at residues 243–312 (DEKVLDRTIE…DLGLGLKNDK (70 aa)) is alpha C-terminal domain (alpha-CTD).

The protein belongs to the RNA polymerase alpha chain family. As to quaternary structure, homodimer. The RNAP catalytic core consists of 2 alpha, 1 beta, 1 beta' and 1 omega subunit. When a sigma factor is associated with the core the holoenzyme is formed, which can initiate transcription.

It catalyses the reaction RNA(n) + a ribonucleoside 5'-triphosphate = RNA(n+1) + diphosphate. Its function is as follows. DNA-dependent RNA polymerase catalyzes the transcription of DNA into RNA using the four ribonucleoside triphosphates as substrates. This is DNA-directed RNA polymerase subunit alpha from Streptococcus pyogenes serotype M1.